Reading from the N-terminus, the 541-residue chain is Beta-hexosaminidase subunit A2 (541 aa).

Residues Met-1 to Ser-21 form the signal peptide. Glu-314 acts as the Proton donor in catalysis. Residues Asn-322, Asn-336, Asn-356, Asn-435, and Asn-483 are each glycosylated (N-linked (GlcNAc...) asparagine).

The protein belongs to the glycosyl hydrolase 20 family.

The protein localises to the lysosome. The catalysed reaction is Hydrolysis of terminal non-reducing N-acetyl-D-hexosamine residues in N-acetyl-beta-D-hexosaminides.. In terms of biological role, responsible for the degradation of GM2 gangliosides, and a variety of other molecules containing terminal N-acetyl hexosamines. This Dictyostelium discoideum (Social amoeba) protein is Beta-hexosaminidase subunit A2 (hexa2).